Reading from the N-terminus, the 439-residue chain is 3beta-hydroxysteroid-dehydrogenase/decarboxylase isoform 1 (439 aa).

Position 16–21 (16–21) interacts with NAD(+); it reads GGRGFA. N-linked (GlcNAc...) asparagine glycosylation is found at N75 and N158. NAD(+)-binding residues include Y161 and K165. K165 acts as the Proton donor in catalysis. N-linked (GlcNAc...) asparagine glycosylation occurs at N327. The Reticulon; atypical domain maps to 371–439; sequence VTETIQWKKQ…MKVFGSKKID (69 aa). The next 2 membrane-spanning stretches (helical) occupy residues 381–401 and 405–425; these read TLIA…TTGS and IITA…INGI.

Belongs to the 3-beta-HSD family.

The protein resides in the endoplasmic reticulum membrane. The catalysed reaction is a 3beta-hydroxysteroid-4alpha-carboxylate + NAD(+) = a 3-oxosteroid + CO2 + NADH. The enzyme catalyses 4alpha-carboxy-4beta,14alpha-dimethyl-9beta,19-cyclo-5alpha-ergost-24(24(1))-en-3beta-ol + NAD(+) = cycloeucalenone + CO2 + NADH. Its pathway is steroid biosynthesis; zymosterol biosynthesis; zymosterol from lanosterol: step 4/6. Its function is as follows. 3beta-hydroxysteroid-dehydrogenase/decarboxylase involved in sterol synthesis. Catalyzes the formation of 3-oxosteroids from 3beta-hydroxysteroids-4alpha-carboxylate. Involved in the regulation of inflorescence internodes and leaves growth, probably by affecting auxin transporter activity possibly by altering sterol composition in the membranes. The polypeptide is 3beta-hydroxysteroid-dehydrogenase/decarboxylase isoform 1 (Arabidopsis thaliana (Mouse-ear cress)).